The primary structure comprises 340 residues: N-acetyl-gamma-glutamyl-phosphate reductase (340 aa).

Cys149 is an active-site residue.

Belongs to the NAGSA dehydrogenase family. Type 1 subfamily.

The protein resides in the cytoplasm. The catalysed reaction is N-acetyl-L-glutamate 5-semialdehyde + phosphate + NADP(+) = N-acetyl-L-glutamyl 5-phosphate + NADPH + H(+). It participates in amino-acid biosynthesis; L-arginine biosynthesis; N(2)-acetyl-L-ornithine from L-glutamate: step 3/4. In terms of biological role, catalyzes the NADPH-dependent reduction of N-acetyl-5-glutamyl phosphate to yield N-acetyl-L-glutamate 5-semialdehyde. The chain is N-acetyl-gamma-glutamyl-phosphate reductase from Vesicomyosocius okutanii subsp. Calyptogena okutanii (strain HA).